The following is an 89-amino-acid chain: MKKIFQLSFTVFIIFISLVLGVVGNVQQKRSNRCIDFPVNPKTGLCVLKDCESVCKKTSKGLEGICWKFNAKGKDPKQCKCCGLWPPLY.

Positions 1–24 (MKKIFQLSFTVFIIFISLVLGVVG) are cleaved as a signal peptide. 4 disulfides stabilise this stretch: Cys-34–Cys-82, Cys-46–Cys-66, Cys-51–Cys-79, and Cys-55–Cys-81.

Belongs to the DEFL family. As to expression, expressed in flower buds, but not in stems, roots or rosette leaves.

The protein localises to the secreted. In Arabidopsis thaliana (Mouse-ear cress), this protein is Defensin-like protein 147 (LCR1).